The chain runs to 211 residues: MSNISNEAVILIKDVKPGSKNLNIVFIVLEIGRVTKTKDGHEVRSCRVADKSGSIAISVWDELGSLIQPGDIIRLTRGYASIWKGCLTLYTGRGGDLQKIGEFCMVYSEVPNFSEPNPELLAQANQQNKTSKEQRGNSPPNQNAGNGTVPVFSNNNAAPVPRDPNFGASGRPNGRAPGNGPPPVTAGGTPAPPKPTVSISNGRDPRRASKR.

Residues 27 to 97 constitute a DNA-binding region (OB); the sequence is IVLEIGRVTK…TLYTGRGGDL (71 aa). Positions 125 to 211 are disordered; that stretch reads NQQNKTSKEQ…GRDPRRASKR (87 aa). Polar residues predominate over residues 136–157; that stretch reads GNSPPNQNAGNGTVPVFSNNNA. The segment covering 179 to 195 has biased composition (pro residues); the sequence is NGPPPVTAGGTPAPPKP.

It belongs to the SOSS-B family. SOSS-B2 subfamily. In terms of assembly, component of the SOSS complex, composed of soss-b (soss-b1/nabp2 or soss-b2/nabp1), soss-a/ints3 and soss-c/inip. SOSS complexes containing soss-b1/nabp2 are more abundant than complexes containing soss-b2/nabp1.

The protein localises to the nucleus. Its function is as follows. Component of the SOSS complex, a multiprotein complex that functions downstream of the MRN complex to promote DNA repair and G2/M checkpoint. In the SOSS complex, acts as a sensor of single-stranded DNA that binds to single-stranded DNA. The SOSS complex associates with DNA lesions and influences diverse endpoints in the cellular DNA damage response including cell-cycle checkpoint activation, recombinational repair and maintenance of genomic stability. Required for efficient homologous recombination-dependent repair of double-strand breaks (DSBs). This is SOSS complex subunit B2 (nabp1) from Danio rerio (Zebrafish).